The following is a 94-amino-acid chain: Small ribosomal subunit protein uS19 (94 aa).

This sequence belongs to the universal ribosomal protein uS19 family.

Protein S19 forms a complex with S13 that binds strongly to the 16S ribosomal RNA. This chain is Small ribosomal subunit protein uS19, found in Natranaerobius thermophilus (strain ATCC BAA-1301 / DSM 18059 / JW/NM-WN-LF).